The sequence spans 504 residues: Maturase K (504 aa).

The protein belongs to the intron maturase 2 family. MatK subfamily.

The protein resides in the plastid. The protein localises to the chloroplast. Its function is as follows. Usually encoded in the trnK tRNA gene intron. Probably assists in splicing its own and other chloroplast group II introns. In Mentzelia laevicaulis (Blazing star), this protein is Maturase K.